A 334-amino-acid chain; its full sequence is F-box protein AUF1 (334 aa).

Positions 1-49 (MDAFDAIPDPVVIDILNRVGDVKTLIRCRSVSKRFNSLATQSESLLLQL) constitute an F-box domain.

In terms of assembly, part of a SCF (ASK-cullin-F-box) protein ligase complex. Interacts with SKP1A/ASK1, SKP1B/ASK2, ASK11 and ASK13.

The protein localises to the nucleus. The protein operates within protein modification; protein ubiquitination. Component of SCF(ASK-cullin-F-box) E3 ubiquitin ligase complexes, which may mediate the ubiquitination and subsequent proteasomal degradation of target proteins. Involved in the control of basipetal and acropetal auxin transport by promoting the distribution and expression of the auxin transporter PIN2. Promotes cytokinin-mediated cell expansion in the root elongation and differentiation zone, without affecting root cell division. This chain is F-box protein AUF1, found in Arabidopsis thaliana (Mouse-ear cress).